We begin with the raw amino-acid sequence, 516 residues long: Endoglucanase 17 (516 aa).

An N-terminal signal peptide occupies residues 1-29 (MALLLVSSSSSYALRVTIFLSFFFFLCNG). D105 acts as the Nucleophile in catalysis. Catalysis depends on residues H433, D484, and E493.

The protein belongs to the glycosyl hydrolase 9 (cellulase E) family.

It is found in the secreted. It carries out the reaction Endohydrolysis of (1-&gt;4)-beta-D-glucosidic linkages in cellulose, lichenin and cereal beta-D-glucans.. The sequence is that of Endoglucanase 17 from Arabidopsis thaliana (Mouse-ear cress).